Here is a 377-residue protein sequence, read N- to C-terminus: Nitric oxide reductase FlRd-NAD(+) reductase (377 aa).

The protein belongs to the FAD-dependent oxidoreductase family. FAD serves as cofactor.

It is found in the cytoplasm. It carries out the reaction 2 reduced [nitric oxide reductase rubredoxin domain] + NAD(+) + H(+) = 2 oxidized [nitric oxide reductase rubredoxin domain] + NADH. It participates in nitrogen metabolism; nitric oxide reduction. One of at least two accessory proteins for anaerobic nitric oxide (NO) reductase. Reduces the rubredoxin moiety of NO reductase. In Salmonella newport (strain SL254), this protein is Nitric oxide reductase FlRd-NAD(+) reductase.